The primary structure comprises 20 residues: Hemocyanin subunit Ib (20 aa).

The tract at residues 1 to 20 is disordered; the sequence is DSVGSTTAHKQQNINHLLDK.

The protein belongs to the tyrosinase family. Hemocyanin subfamily. Composed of 3 major subunits (IB, II and III) and 1 minor subunit (IA) which form homohexamers and heterohexamers. May also form larger structures. Hemolymph.

It is found in the secreted. The protein resides in the extracellular space. Functionally, hemocyanins are copper-containing oxygen carriers occurring freely dissolved in the hemolymph of many mollusks and arthropods. In Panulirus japonicus (Japanese spiny lobster), this protein is Hemocyanin subunit Ib.